The sequence spans 790 residues: Endonuclease MutS2 (790 aa).

Residue 334–341 (GPNTGGKT) participates in ATP binding. Residues 715–790 (IDVRGQNLEE…GMGVTIVHLK (76 aa)) form the Smr domain.

The protein belongs to the DNA mismatch repair MutS family. MutS2 subfamily. Homodimer. Binds to stalled ribosomes, contacting rRNA.

Functionally, endonuclease that is involved in the suppression of homologous recombination and thus may have a key role in the control of bacterial genetic diversity. Acts as a ribosome collision sensor, splitting the ribosome into its 2 subunits. Detects stalled/collided 70S ribosomes which it binds and splits by an ATP-hydrolysis driven conformational change. Acts upstream of the ribosome quality control system (RQC), a ribosome-associated complex that mediates the extraction of incompletely synthesized nascent chains from stalled ribosomes and their subsequent degradation. Probably generates substrates for RQC. This is Endonuclease MutS2 from Alkaliphilus oremlandii (strain OhILAs) (Clostridium oremlandii (strain OhILAs)).